Reading from the N-terminus, the 205-residue chain is Nitrophorin-7 (205 aa).

The signal sequence occupies residues 1–20 (MELYTALLAVTILSPSSIVG). Disulfide bonds link Cys25–Cys144 and Cys62–Cys193. A histamine-binding site is contributed by Asp52. Heme contacts are provided by His80 and Asn91. Asp154 is a binding site for histamine.

It belongs to the calycin superfamily. Nitrophorin family. As to quaternary structure, forms oligomers (at pH 5.5). The cofactor is heme b. As to expression, expressed in the endothelial cells of the salivary glands.

The protein localises to the secreted. It catalyses the reaction 3 nitrite + 2 H(+) = 2 nitric oxide + nitrate + H2O. Its function is as follows. Converts nitrite as the sole substrate to form nitric oxide gas (NO). NO(2-) serves both as an electron donor and as an electron acceptor. Binds to negatively charged cell surfaces of activated platelets; binds to L-a-phosphatidyl-L-serine (PS)-bearing phospholipid membranes. Once bound on an activated platelet, NP7 releases its stored nitric oxide gas (NO) into the victim's tissues while feeding, resulting in vasodilation and inhibition of platelet aggregation. Also acts as an anticoagulant by blocking coagulation-factor binding sites. Has antihistamine activity; binds histamine with high affinity. The sequence is that of Nitrophorin-7 from Rhodnius prolixus (Triatomid bug).